The primary structure comprises 91 residues: Cell division protein FtsB (91 aa).

Residues 1-3 (MKW) lie on the Cytoplasmic side of the membrane. A helical membrane pass occupies residues 4 to 21 (LVAVLVVFVAMFQYRLWV). At 22–91 (GEGSIADVVR…ETFFMIIDDQ (70 aa)) the chain is on the periplasmic side. Residues 23 to 63 (EGSIADVVRLEREIARQEADNERLRERNKQLAAEVDALKTG) are a coiled coil.

It belongs to the FtsB family. In terms of assembly, part of a complex composed of FtsB, FtsL and FtsQ.

It is found in the cell inner membrane. Functionally, essential cell division protein. May link together the upstream cell division proteins, which are predominantly cytoplasmic, with the downstream cell division proteins, which are predominantly periplasmic. The protein is Cell division protein FtsB of Teredinibacter turnerae (strain ATCC 39867 / T7901).